Consider the following 187-residue polypeptide: Aminodeoxychorismate synthase component 2 (187 aa).

Residues 1-187 (MILLIDNYDS…HQLLANFLHR (187 aa)) form the Glutamine amidotransferase type-1 domain. Catalysis depends on residues Cys79, His168, and Glu170.

Monomer. Heterodimer consisting of two non-identical subunits: a glutamine amidotransferase subunit (PabA) and a aminodeoxychorismate synthase subunit (PabB).

The enzyme catalyses chorismate + L-glutamine = 4-amino-4-deoxychorismate + L-glutamate. Its pathway is cofactor biosynthesis; tetrahydrofolate biosynthesis; 4-aminobenzoate from chorismate: step 1/2. Inhibited by 6-diazo-5-oxo-L-norleucine (DON). The inhibition is competitive with glutamine, but uncompetitive with chorismate. Part of a heterodimeric complex that catalyzes the two-step biosynthesis of 4-amino-4-deoxychorismate (ADC), a precursor of p-aminobenzoate (PABA) and tetrahydrofolate. In the first step, a glutamine amidotransferase (PabA) generates ammonia as a substrate that, along with chorismate, is used in the second step, catalyzed by aminodeoxychorismate synthase (PabB) to produce ADC. PabA converts glutamine into glutamate only in the presence of stoichiometric amounts of PabB. This is Aminodeoxychorismate synthase component 2 from Escherichia coli (strain K12).